A 267-amino-acid chain; its full sequence is Shikimate dehydrogenase (NADP(+)) (267 aa).

Residues 14–16 (SLS) and Thr-61 contribute to the shikimate site. Catalysis depends on Lys-65, which acts as the Proton acceptor. Residues Asn-86 and Asp-101 each coordinate shikimate. NADP(+)-binding positions include 126 to 130 (GAGGA), 150 to 155 (NRTPFK), and Leu-213. Tyr-215 is a binding site for shikimate. Gly-236 contacts NADP(+).

The protein belongs to the shikimate dehydrogenase family. Homodimer.

It catalyses the reaction shikimate + NADP(+) = 3-dehydroshikimate + NADPH + H(+). It participates in metabolic intermediate biosynthesis; chorismate biosynthesis; chorismate from D-erythrose 4-phosphate and phosphoenolpyruvate: step 4/7. In terms of biological role, involved in the biosynthesis of the chorismate, which leads to the biosynthesis of aromatic amino acids. Catalyzes the reversible NADPH linked reduction of 3-dehydroshikimate (DHSA) to yield shikimate (SA). The polypeptide is Shikimate dehydrogenase (NADP(+)) (Ruthia magnifica subsp. Calyptogena magnifica).